The following is a 205-amino-acid chain: Small ribosomal subunit protein uS2 (205 aa).

This sequence belongs to the universal ribosomal protein uS2 family.

This is Small ribosomal subunit protein uS2 from Methanoculleus marisnigri (strain ATCC 35101 / DSM 1498 / JR1).